The following is a 642-amino-acid chain: MIPNGYLMFEDENFIESSVAKLNALRKSGQFCDVRLQVCGHEMLAHRAVLACCSPYLFEIFNSDSDPHGISHVKFDDLNPEAVEVLLNYAYTAQLKADKELVKDVYSAAKKLKMDRVKQVCGDYLLSRMDVTSCISYRNFASCMGDSRLLNKVDAYIQEHLLQISEEEEFLKLPRLKLEVMLEDNVCLPSNGKLYTKVINWVQRSIWENGDSLEELMEEVQTLYYSADHKLLDGNLLDGQAEVFGSDDDHIQFVQKKPPRENGHKQISSSSTGCLSSPNATVQSPKHEWKIVASEKTSNNTYLCLAVLDGIFCVIFLHGRNSPQSSPTSTPKLSKSLSFEMQQDELIEKPMSPMQYARSGLGTAEMNGKLIAAGGYNREECLRTVECYNPHTDHWSFLAPMRTPRARFQMAVLMGQLYVVGGSNGHSDDLSCGEMYDSNIDDWIPVPELRTNRCNAGVCALNGKLYIVGGSDPYGQKGLKNCDVFDPVTKLWTSCAPLNIRRHQSAVCELGGYLYIIGGAESWNCLNTVERYNPENNTWTLIAPMNVARRGAGVAVLNGKLFVCGGFDGSHAISCVEMYDPTRNEWKMMGNMTSPRSNAGIATVGNTIYAVGGFDGNEFLNTVEVYNLESNEWSPYTKIFQF.

Residues Met1 to Val131 form the BTB domain. The region spanning Thr132–Pro350 is the BACK domain. Residues Ile164–Gly368 are sufficient for AHR interaction and signaling. Phosphoserine is present on residues Ser246, Ser277, Ser322, Ser336, and Ser338. The interval Lys257–Thr281 is disordered. The span at Lys265–Thr281 shows a compositional bias: polar residues. 6 Kelch repeats span residues Thr384–Gly421, Cys432–Gly469, Asn481–Gly518, Asn527–Gly565, Cys575–Gly612, and Thr622–Phe642.

This sequence belongs to the BTB-kelch protein family. As to quaternary structure, homodimer; through the BTB domain. Interacts with AHR/Aryl hydrocarbon receptor. Interacts (via BACK domain) with pre-mRNA-binding protein HNRNPK; the interaction is direct. Interacts (via BACK domain) with splicing factor PTBP1; the interaction is direct. Interacts (via Kelch repeats) with RNA polymerase POLR2A (via C-terminal domain). Interacts (via BACK domain) with splicing factor SNRPA; the interaction is indirect. Interacts (via Kelch repeats) with splicing factor SART1. Interacts (via BACK domain) with ALYREF; the interaction is indirect and likely plays a role in mRNA nuclear export. Interacts (via Kelch repeats) with KLHL20 (via Kelch repeats); this interaction blocks the assembly of Cul3-KLHL20 complex. (Microbial infection) Interacts (via BACK domain) with influenza A virus non-structural protein 1 (NS1); the interaction is direct and bridges the interaction between NS1 and HNRNPK.

Its subcellular location is the cytoplasm. It is found in the cytoskeleton. It localises to the nucleus. The protein localises to the nucleoplasm. Its function is as follows. Involved in many cell functions, including pre-mRNA splicing, the aryl hydrocarbon receptor (AHR) pathway, F-actin organization and protein ubiquitination. Plays a role in the dynamic organization of the actin skeleton as a stabilizer of actin filaments by association with F-actin through Kelch repeats. Protects cells from cell death induced by actin destabilization. Functions as modifier of the AHR/Aryl hydrocarbon receptor pathway increasing the concentration of AHR available to activate transcription. In addition, functions as a negative regulator of BCR(KLHL20) E3 ubiquitin ligase complex to prevent ubiquitin-mediated proteolysis of PML and DAPK1, two tumor suppressors. Inhibits pre-mRNA splicing (in vitro). May play a role in mRNA nuclear export. In terms of biological role, (Microbial infection) Involved in the alternative splicing of influenza A virus M1 mRNA through interaction with HNRNPK, thereby facilitating the generation of viral M2 protein. The BTB and Kelch domains are required for splicing activity. Promotes export of viral M mRNA and RNP via its interaction with mRNA export factor ALYREF. The polypeptide is Influenza virus NS1A-binding protein (Homo sapiens (Human)).